We begin with the raw amino-acid sequence, 610 residues long: MSEIFDAKAFLKTVTSQPGVYRMYDAGGTVIYVGKAKDLKKRLSSYFRSNLASRKTEALVAQIQHIDVTVTHTETEALLLEHNYIKLYQPRYNVLLRDDKSYPFIFLSGDTHPRLAMHRGAKHAKGEYFGPFPNGYAVRETLALLQKIFPVRQCENSVYRNRSRPCLQYQIGRCLGPCVAGLVSEEEYAQQVEYVRLFLSGKDDQVLTQLIARMEKASQDLAFEEAARIRDQIQAVRRVTERQFVSNAGDDLDVIGVAFDAGMACVHVLFIRQGKVLGSRSYFPKVPGGTELGEVVETFVGQFYLQGSQMRTLPGEILLDFNLSDKTLLADSLSELAGRRIHVQTKPRGDRARYLKLARTNAATALITKLSQQSTITQRLTALAAVLKLPAIKRMECFDISHTMGEQTVASCVVFDANGPLRAEYRRYNIAGITPGDDYAAMNQVLRRRYGKAIEESKIPDVILIDGGKGQLAQAKAVFAELDVPWDKHRPLLLGVAKGADRKAGLETLFFEPEGEGFSLPPDSPALHVIQHIRDESHDHAIGGHRKKRAKVKNTSTLETIEGVGPKRRQMLLKYMGGLQGLRNASVEEIAKVPGISQGLAEKIFWSLKH.

The GIY-YIG domain maps to 16–94 (SQPGVYRMYD…IKLYQPRYNV (79 aa)). Residues 204–239 (DQVLTQLIARMEKASQDLAFEEAARIRDQIQAVRRV) form the UVR domain.

This sequence belongs to the UvrC family. In terms of assembly, interacts with UvrB in an incision complex.

Its subcellular location is the cytoplasm. Its function is as follows. The UvrABC repair system catalyzes the recognition and processing of DNA lesions. UvrC both incises the 5' and 3' sides of the lesion. The N-terminal half is responsible for the 3' incision and the C-terminal half is responsible for the 5' incision. The polypeptide is UvrABC system protein C (Salmonella dublin (strain CT_02021853)).